The primary structure comprises 94 residues: Integration host factor subunit beta (94 aa).

Belongs to the bacterial histone-like protein family. Heterodimer of an alpha and a beta chain.

In terms of biological role, this protein is one of the two subunits of integration host factor, a specific DNA-binding protein that functions in genetic recombination as well as in transcriptional and translational control. This chain is Integration host factor subunit beta, found in Escherichia fergusonii (strain ATCC 35469 / DSM 13698 / CCUG 18766 / IAM 14443 / JCM 21226 / LMG 7866 / NBRC 102419 / NCTC 12128 / CDC 0568-73).